Here is a 317-residue protein sequence, read N- to C-terminus: Glutamyl-tRNA reductase-binding protein, chloroplastic (317 aa).

Residues 1-42 constitute a chloroplast transit peptide; the sequence is MQLQTQSFALNLLPSPNFAKPIERREFISLKRDPSRPISLRC.

Interacts with HEMA1 and forms a heterotetramer of two GLUTRBP and two HEMA1 subunits.

The protein resides in the plastid. It is found in the chloroplast stroma. Functionally, involved in the regulation of glutamyl-tRNA reductase (GluTR) which is important for the synthesis and distribution of 5-aminolevulinate, a precursor in heme and chlorophyll biosynthesis. Stimulates GluTR activity and regulates glutamate-1-semialdehyde release. May play a role in heme metabolism. Necessary for efficient photosynthetic electron transport in chloroplasts. The polypeptide is Glutamyl-tRNA reductase-binding protein, chloroplastic (Arabidopsis thaliana (Mouse-ear cress)).